Consider the following 423-residue polypeptide: Zinc finger protein Gfi-1 (423 aa).

An SNAG domain region spans residues 1–20 (MPRSFLVKSKKAHSYHQPRS). The segment at 1 to 102 (MPRSFLVKSK…PPSPSVSPAS (102 aa)) is disordered. Phosphoserine is present on residues serine 20 and serine 57. Basic and acidic residues predominate over residues 48-57 (SKMEPRERLS). The interval 141–258 (RQCSALERSA…LLLGGGSYKC (118 aa)) is required for interaction with RELA. 6 C2H2-type zinc fingers span residues 256–279 (YKCI…RRSH), 285–307 (FACE…KAVH), 313–335 (FDCK…LLIH), 341–363 (YPCQ…TFIH), 369–391 (HKCQ…SRKH), and 397–420 (FGCD…ETQH).

As to quaternary structure, interacts with U2AF1L4. Component of RCOR-GFI-KDM1A-HDAC complexes. Interacts directly with RCOR1, KDM1A and HDAC2. Also interacts with HDAC1. regions. Interacts (via the zinc-finger domain) with ARIH2; the interaction prevents GFI1 ubiquitination and proteasomal degradation. Interacts with PIAS3; the interaction relieves the inhibitory effect of PIAS3 on STAT3-mediated transcriptional activity. Forms a complex with EHMT2 and HDAC1 to promote 'Lys-9' dimethylation of H3 (H3K9Me2) and repress expression of target genes. Interacts directly with EHMT2. Component of the GFI1-AJUBA-HDAC1 repressor complex. Interacts directly with AJUBA (via ITS LIM domains); the interaction results in the HDAC-dependent corepression of a subset of GFI1 target genes and, occurs independent of the SNAG domain. Interacts with SPI1; the interaction inhibits SPI1 transcriptional activity targeted at macrophage-specific genes, repressing macrophage differentiation of myeloid progenitor cells and promoting granulocyte commitment. Interacts with RUNX1T1; the interaction represses HDAC-mediated transcriptional activity. Interacts with RELA; the interaction occurs on liposaccharide (LPS) stimulation controls RELA DNA binding activity and regulates endotoxin-mediated TOLL-like receptor inflammatory response. Interacts (via the C-terminal zinc fingers) with ZBTB17; the interaction results in the recruitment of GFI1 to the CDKN1A/p21 promoter and repression of CDKN1A/p21 transcription. Post-translationally, ubiquitinated. In terms of tissue distribution, restricted to lymphoid tissues and testes in adult animals.

It is found in the nucleus. Its function is as follows. Transcription repressor essential for hematopoiesis. Functions in a cell-context and development-specific manner. Binds to 5'-TAAATCAC[AT]GCA-3' in the promoter region of a large number of genes. Component of several complexes, including the EHMT2-GFI1-HDAC1, AJUBA-GFI1-HDAC1 and RCOR-GFI-KDM1A-HDAC complexes, that suppress, via histone deacetylase (HDAC) recruitment, a number of genes implicated in multilineage blood cell development. Regulates neutrophil differentiation, promotes proliferation of lymphoid cells, and is required for granulocyte development. Inhibits SPI1 transcriptional activity at macrophage-specific genes, repressing macrophage differentiation of myeloid progenitor cells and promoting granulocyte commitment. Mediates, together with U2AF1L4, the alternative splicing of CD45 and controls T-cell receptor signaling. Regulates the endotoxin-mediated Toll-like receptor (TLR) inflammatory response by antagonizing RELA. Cooperates with CBFA2T2 to regulate ITGB1-dependent neurite growth. Controls cell-cycle progression by repressing CDKNIA/p21 transcription in response to TGFB1 via recruitment of GFI1 by ZBTB17 to the CDKNIA/p21 and CDKNIB promoters. Required for the maintenance of inner ear hair cells. In addition to its role in transcription, acts as a substrate adapter for PRMT1 in the DNA damage response: facilitates the recognition of TP53BP1 and MRE11 substrates by PRMT1, promoting their methylation and the DNA damage response. This Rattus norvegicus (Rat) protein is Zinc finger protein Gfi-1 (Gfi1).